Reading from the N-terminus, the 349-residue chain is Phosphate acetyltransferase (349 aa).

It belongs to the phosphate acetyltransferase and butyryltransferase family.

The protein localises to the cytoplasm. It carries out the reaction acetyl-CoA + phosphate = acetyl phosphate + CoA. Its pathway is metabolic intermediate biosynthesis; acetyl-CoA biosynthesis; acetyl-CoA from acetate: step 2/2. This chain is Phosphate acetyltransferase (pta), found in Rickettsia typhi (strain ATCC VR-144 / Wilmington).